Consider the following 160-residue polypeptide: Cytosolic iron-sulfur assembly component 2A (160 aa).

Zn(2+)-binding residues include histidine 89, histidine 123, glutamate 150, and glutamate 153.

The protein belongs to the MIP18 family. In terms of assembly, monomer and homodimer. Component of the CIA complex. Interacts with CIAO1. Interacts with IREB2. Interacts with APAF1.

Its subcellular location is the cytoplasm. Component of the cytosolic iron-sulfur protein assembly (CIA) complex, a multiprotein complex that mediates the incorporation of iron-sulfur cluster into extramitochondrial Fe/S proteins. As a CIA complex component and in collaboration with CIAO1 specifically matures ACO1 and stabilizes IREB2, connecting cytosolic iron-sulfur protein maturation with cellular iron regulation. May play a role in chromosome segregation through establishment of sister chromatid cohesion. May induce apoptosis in collaboration with APAF1. The sequence is that of Cytosolic iron-sulfur assembly component 2A from Bos taurus (Bovine).